A 60-amino-acid polypeptide reads, in one-letter code: Large ribosomal subunit protein bL32 (60 aa).

The protein belongs to the bacterial ribosomal protein bL32 family.

In Borreliella burgdorferi (strain ATCC 35210 / DSM 4680 / CIP 102532 / B31) (Borrelia burgdorferi), this protein is Large ribosomal subunit protein bL32 (rpmF).